A 347-amino-acid polypeptide reads, in one-letter code: NADH-quinone oxidoreductase subunit H (347 aa).

The next 8 helical transmembrane spans lie at 25–45, 95–115, 128–148, 168–188, 200–220, 251–271, 284–304, and 324–344; these read ILFMVVQSLVIFLVVVIVAAM, FMFTLAPAVAMFTALASFAII, IGILFFFAMAGIAVYAVLFGG, ISYEVFLGLSLMGVVALTGSF, GWYIIPQFFGFLTFVVAGVAV, FFIGEYVNVVLISALMTCLFF, FIPPAFWFMIKTLFFMTMFVL, and VCLPVTLINLLVTAAVILIFS.

This sequence belongs to the complex I subunit 1 family. In terms of assembly, NDH-1 is composed of 14 different subunits. Subunits NuoA, H, J, K, L, M, N constitute the membrane sector of the complex.

The protein resides in the cell inner membrane. The catalysed reaction is a quinone + NADH + 5 H(+)(in) = a quinol + NAD(+) + 4 H(+)(out). Its function is as follows. NDH-1 shuttles electrons from NADH, via FMN and iron-sulfur (Fe-S) centers, to quinones in the respiratory chain. The immediate electron acceptor for the enzyme in this species is believed to be ubiquinone. Couples the redox reaction to proton translocation (for every two electrons transferred, four hydrogen ions are translocated across the cytoplasmic membrane), and thus conserves the redox energy in a proton gradient. This subunit may bind ubiquinone. This chain is NADH-quinone oxidoreductase subunit H, found in Psychrobacter cryohalolentis (strain ATCC BAA-1226 / DSM 17306 / VKM B-2378 / K5).